A 358-amino-acid chain; its full sequence is Envelope glycoprotein K (358 aa).

Residues 1–33 (MSRVQCLRLAAVIASISHLIFLVWFVCWNSVLE) form the signal peptide. Topologically, residues 34–141 (NNEDCVYATR…LEMADCMAYL (108 aa)) are extracellular. 2 N-linked (GlcNAc...) asparagine; by host glycosylation sites follow: Asn-57 and Asn-80. A helical membrane pass occupies residues 142-162 (WFFQVRTATAALLMYLAFLCV). The Cytoplasmic portion of the chain corresponds to 163 to 235 (NRQRRGFGPW…DTLGFYLMHP (73 aa)). Residues 236-256 (LALLLRAIETILYFASLVASA) traverse the membrane as a helical segment. Residues 257-273 (TVLRVNFDPCSVVLPNH) are Extracellular-facing. A helical membrane pass occupies residues 274-294 (VKVFAWVFVAALGALEVVSAI). The Cytoplasmic portion of the chain corresponds to 295-323 (DHLRRETRSARDAAAVIRPTNIIAACCAN). Residues 324–344 (IISHVLLRMLYGAALVLVVIG) traverse the membrane as a helical segment. Topologically, residues 345-358 (ALKYEREIQTRLLG) are extracellular.

This sequence belongs to the alphaherpesvirinae glycoprotein K family. In terms of assembly, interacts (via UL20 interaction region) with protein UL20 (via N-terminus); this interaction probably plays a role in the coordinate transport of protein UL20 and gK to the trans-Golgi network (TGN), and is required for the cell surface expression of gK.

The protein resides in the host cell membrane. It localises to the host endosome membrane. It is found in the host Golgi apparatus membrane. In terms of biological role, glycoprotein that probably modulates membrane fusion events during secondary envelopment of cytoplasmic capsids that bud into specific trans-Golgi network (TGN)-derived membranes. Also plays a role, together with gB, in virus-induced cell-to-cell fusion (syncytia formation). Seems to block fusion of virions with infected-cell membranes. The protein is Envelope glycoprotein K (gK) of Psittacid herpesvirus 1 (isolate Amazon parrot/-/97-0001/1997) (PsHV-1).